Reading from the N-terminus, the 344-residue chain is Methionine import ATP-binding protein MetN (344 aa).

The ABC transporter domain occupies 2 to 241 (IELKNIGKQF…PTTQLAQQFI (240 aa)). 38–45 (GASGAGKS) contributes to the ATP binding site.

Belongs to the ABC transporter superfamily. Methionine importer (TC 3.A.1.24) family. The complex is composed of two ATP-binding proteins (MetN), two transmembrane proteins (MetI) and a solute-binding protein (MetQ).

The protein resides in the cell inner membrane. It catalyses the reaction L-methionine(out) + ATP + H2O = L-methionine(in) + ADP + phosphate + H(+). The catalysed reaction is D-methionine(out) + ATP + H2O = D-methionine(in) + ADP + phosphate + H(+). Part of the ABC transporter complex MetNIQ involved in methionine import. Responsible for energy coupling to the transport system. This Haemophilus ducreyi (strain 35000HP / ATCC 700724) protein is Methionine import ATP-binding protein MetN.